A 238-amino-acid chain; its full sequence is MGPVSTSRRGLRLGISLILLQVGVVGACTVSVLQPGYLEVDYTSQTVTMECTFSTTGCPAVQPKSLWFRCGTHQPEALCLDGCRNEADKFTVKETLDQNRVSLTVNRLSPNDSAIYICGIAFPNEPVPTAKQTGDGTTLVVRERLFSREVHSLLIVLLALLAVYVTGVCVIFIVLFRSKSNTPRSRETKEDSKKKSARRIFQEIAQELYHKRYVETSHQPEQDGNYENRKALPSPGRP.

The signal sequence occupies residues 1–27; that stretch reads MGPVSTSRRGLRLGISLILLQVGVVGA. Residues 28 to 153 lie on the Extracellular side of the membrane; that stretch reads CTVSVLQPGY…RLFSREVHSL (126 aa). One can recognise an Ig-like C2-type domain in the interval 30-134; it reads VSVLQPGYLE…EPVPTAKQTG (105 aa). Cysteine 51 and cysteine 118 are joined by a disulfide. The helical transmembrane segment at 154-174 threads the bilayer; the sequence is LIVLLALLAVYVTGVCVIFIV. At 175-238 the chain is on the cytoplasmic side; the sequence is LFRSKSNTPR…RKALPSPGRP (64 aa). Over residues 215–230 the composition is skewed to basic and acidic residues; sequence ETSHQPEQDGNYENRK. The interval 215 to 238 is disordered; sequence ETSHQPEQDGNYENRKALPSPGRP.

The protein resides in the membrane. In Rattus norvegicus (Rat), this protein is Immunoglobulin superfamily member 6 (Igsf6).